Reading from the N-terminus, the 178-residue chain is Cytochrome b6-f complex iron-sulfur subunit (178 aa).

A helical membrane pass occupies residues Leu-20–Met-42. In terms of domain architecture, Rieske spans Lys-65–Val-161. [2Fe-2S] cluster is bound by residues Cys-107, His-109, Cys-125, and His-128. A disulfide bridge connects residues Cys-112 and Cys-127.

It belongs to the Rieske iron-sulfur protein family. As to quaternary structure, the 4 large subunits of the cytochrome b6-f complex are cytochrome b6, subunit IV (17 kDa polypeptide, PetD), cytochrome f and the Rieske protein, while the 4 small subunits are PetG, PetL, PetM and PetN. The complex functions as a dimer. Requires [2Fe-2S] cluster as cofactor.

It localises to the cellular thylakoid membrane. The enzyme catalyses 2 oxidized [plastocyanin] + a plastoquinol + 2 H(+)(in) = 2 reduced [plastocyanin] + a plastoquinone + 4 H(+)(out). Component of the cytochrome b6-f complex, which mediates electron transfer between photosystem II (PSII) and photosystem I (PSI), cyclic electron flow around PSI, and state transitions. This Prochlorococcus marinus (strain MIT 9215) protein is Cytochrome b6-f complex iron-sulfur subunit.